Here is a 344-residue protein sequence, read N- to C-terminus: tRNA N6-adenosine threonylcarbamoyltransferase (344 aa).

Positions 113 and 117 each coordinate Fe cation. Residues 135 to 139, aspartate 169, glycine 182, aspartate 186, and asparagine 278 contribute to the substrate site; that span reads LVSGG. Aspartate 306 lines the Fe cation pocket. Positions 325 to 344 are disordered; the sequence is ESPISVGTDPSLSVETPQVF. Residues 326–344 show a composition bias toward polar residues; it reads SPISVGTDPSLSVETPQVF.

The protein belongs to the KAE1 / TsaD family. It depends on Fe(2+) as a cofactor.

Its subcellular location is the cytoplasm. The enzyme catalyses L-threonylcarbamoyladenylate + adenosine(37) in tRNA = N(6)-L-threonylcarbamoyladenosine(37) in tRNA + AMP + H(+). Required for the formation of a threonylcarbamoyl group on adenosine at position 37 (t(6)A37) in tRNAs that read codons beginning with adenine. Is involved in the transfer of the threonylcarbamoyl moiety of threonylcarbamoyl-AMP (TC-AMP) to the N6 group of A37, together with TsaE and TsaB. TsaD likely plays a direct catalytic role in this reaction. The polypeptide is tRNA N6-adenosine threonylcarbamoyltransferase (Corynebacterium glutamicum (strain R)).